The sequence spans 566 residues: Lactase-like protein (566 aa).

The signal sequence occupies residues M1 to T20. Residues A21–E540 lie on the Extracellular side of the membrane. N-linked (GlcNAc...) asparagine glycosylation is found at N170 and N244. A helical membrane pass occupies residues I541–L561. At L562–G566 the chain is on the cytoplasmic side.

The protein belongs to the glycosyl hydrolase 1 family. Klotho subfamily. In terms of assembly, may form dimers. As to expression, strongly expressed in the lens of the eye, where it localizes to the equatorial epithelium and outer layers of newly extending fiber cells (at protein level). May also be expressed in kidney and skin. However, another study suggests that expression is specific to eye and is minimal in other tissues.

It localises to the endoplasmic reticulum membrane. Plays a role in formation of the lens suture in the eye, which is important for normal optical properties of the lens. This Mus musculus (Mouse) protein is Lactase-like protein (Lctl).